Consider the following 837-residue polypeptide: Translation initiation factor IF-2 (837 aa).

The segment covering 97-139 (AEEIEAEQRRELEEQRAAEEAARLKAEQEARERAEEEARRQAE) has biased composition (basic and acidic residues). The disordered stretch occupies residues 97–253 (AEEIEAEQRR…QHGFQSPTGP (157 aa)). Low complexity predominate over residues 140–175 (AAKAQTAETAAPAAAESASSAEPAQVVAAVEAAAPA). The segment covering 176–197 (PERKKEEPRRVEKPRSDDDERR) has biased composition (basic and acidic residues). Positions 198-208 (DRKHAQHRPSL) are enriched in basic residues. Positions 219–229 (RSGEDEADGFR) are enriched in basic and acidic residues. Residues 230-244 (RGGRGGKSKLKKRNQ) are compositionally biased toward basic residues. The tr-type G domain occupies 337–504 (ARAPVVTVMG…AVLLQAEILE (168 aa)). Residues 346–353 (GHVDHGKT) are G1. GTP is bound at residue 346 to 353 (GHVDHGKT). The segment at 371-375 (GITQH) is G2. The G3 stretch occupies residues 392–395 (DTPG). GTP is bound by residues 392-396 (DTPGH) and 446-449 (NKID). The interval 446–449 (NKID) is G4. The segment at 482–484 (SAK) is G5.

It belongs to the TRAFAC class translation factor GTPase superfamily. Classic translation factor GTPase family. IF-2 subfamily.

The protein localises to the cytoplasm. One of the essential components for the initiation of protein synthesis. Protects formylmethionyl-tRNA from spontaneous hydrolysis and promotes its binding to the 30S ribosomal subunits. Also involved in the hydrolysis of GTP during the formation of the 70S ribosomal complex. This is Translation initiation factor IF-2 from Stutzerimonas stutzeri (strain A1501) (Pseudomonas stutzeri).